A 359-amino-acid chain; its full sequence is RuBisCO accumulation factor 1 (359 aa).

Positions 12–195 (LSPEETDALF…RQKIEQLLSD (184 aa)) are N-terminal alpha-helix. The C-terminal beta-sheet stretch occupies residues 219–345 (PLLIPVAGSL…VLLVMRPKKI (127 aa)).

It belongs to the RAF family. In terms of assembly, homodimer. Forms an RbcL(8)-Raf1(8) complex. Forms complexes of many stoichiometries with RbcL with and without RbcS. RbcX and Raf1 can bind simultaneously to RbcL.

The protein localises to the cytoplasm. A major RuBisCO chaperone. Acts after GroEL-GroES chaperonin to fold and/or assemble the large subunit of RuBisCO (ccbL, rbcL). Cooperates with RbcX in RbcL folding, plays the major role in assembly of dimers into RbcL(8)-Raf1(8) intermediate complexes. RbcS replaces Raf1, leading to holoenzyme formation. In terms of biological role, raf1 and RbcX are probably functionally redundant; it has been suggested they may cooperate. The chain is RuBisCO accumulation factor 1 from Picosynechococcus sp. (strain ATCC 27264 / PCC 7002 / PR-6) (Agmenellum quadruplicatum).